The following is a 158-amino-acid chain: Ribosome maturation factor RimP (158 aa).

It belongs to the RimP family.

Its subcellular location is the cytoplasm. Functionally, required for maturation of 30S ribosomal subunits. In Pseudomonas syringae pv. tomato (strain ATCC BAA-871 / DC3000), this protein is Ribosome maturation factor RimP.